The chain runs to 102 residues: Small ribosomal subunit protein uS10 (102 aa).

Belongs to the universal ribosomal protein uS10 family. As to quaternary structure, part of the 30S ribosomal subunit.

Its function is as follows. Involved in the binding of tRNA to the ribosomes. The polypeptide is Small ribosomal subunit protein uS10 (Ligilactobacillus salivarius (strain UCC118) (Lactobacillus salivarius)).